The primary structure comprises 493 residues: Glutamyl-tRNA(Gln) amidotransferase subunit A (493 aa).

Active-site charge relay system residues include Lys78 and Ser158. Ser182 functions as the Acyl-ester intermediate in the catalytic mechanism.

Belongs to the amidase family. GatA subfamily. In terms of assembly, heterotrimer of A, B and C subunits.

It carries out the reaction L-glutamyl-tRNA(Gln) + L-glutamine + ATP + H2O = L-glutaminyl-tRNA(Gln) + L-glutamate + ADP + phosphate + H(+). Allows the formation of correctly charged Gln-tRNA(Gln) through the transamidation of misacylated Glu-tRNA(Gln) in organisms which lack glutaminyl-tRNA synthetase. The reaction takes place in the presence of glutamine and ATP through an activated gamma-phospho-Glu-tRNA(Gln). This is Glutamyl-tRNA(Gln) amidotransferase subunit A from Methylorubrum populi (strain ATCC BAA-705 / NCIMB 13946 / BJ001) (Methylobacterium populi).